Here is a 337-residue protein sequence, read N- to C-terminus: S-adenosylmethionine:tRNA ribosyltransferase-isomerase (337 aa).

Belongs to the QueA family. As to quaternary structure, monomer.

The protein localises to the cytoplasm. The catalysed reaction is 7-aminomethyl-7-carbaguanosine(34) in tRNA + S-adenosyl-L-methionine = epoxyqueuosine(34) in tRNA + adenine + L-methionine + 2 H(+). The protein operates within tRNA modification; tRNA-queuosine biosynthesis. In terms of biological role, transfers and isomerizes the ribose moiety from AdoMet to the 7-aminomethyl group of 7-deazaguanine (preQ1-tRNA) to give epoxyqueuosine (oQ-tRNA). The chain is S-adenosylmethionine:tRNA ribosyltransferase-isomerase from Legionella pneumophila subsp. pneumophila (strain Philadelphia 1 / ATCC 33152 / DSM 7513).